The sequence spans 239 residues: Probable inner membrane transporter protein TsaS (239 aa).

4 helical membrane-spanning segments follow: residues 65–85 (AIGA…WLMG), 128–148 (GLVG…IALL), 160–180 (ATVP…LFGA), and 186–206 (AHTF…VVLG).

It belongs to the 4-toluene sulfonate uptake permease (TSUP) (TC 2.A.102) family. As to quaternary structure, part of a two-component transport system composed of TsaT and TsaS.

Its subcellular location is the cell inner membrane. In terms of biological role, involved in the uptake of p-toluenesulphonate (TSA). In Comamonas testosteroni (Pseudomonas testosteroni), this protein is Probable inner membrane transporter protein TsaS (tsaS).